Reading from the N-terminus, the 379-residue chain is Probable leucine aminopeptidase ARB_01443 (379 aa).

The N-terminal stretch at 1–18 (MKIATLAVVSAFAATAIA) is a signal peptide. Zn(2+)-binding residues include His182 and Asp201. N-linked (GlcNAc...) asparagine glycans are attached at residues Asn202 and Asn226. Zn(2+) contacts are provided by Glu240 and Asp267. A disulfide bridge connects residues Cys312 and Cys316. His345 is a binding site for Zn(2+).

Belongs to the peptidase M28 family. M28E subfamily. Monomer. Requires Zn(2+) as cofactor.

The protein localises to the secreted. Functionally, probable extracellular aminopeptidase which contributes to pathogenicity. This chain is Probable leucine aminopeptidase ARB_01443, found in Arthroderma benhamiae (strain ATCC MYA-4681 / CBS 112371) (Trichophyton mentagrophytes).